Consider the following 293-residue polypeptide: Fructose-bisphosphate aldolase (293 aa).

A D-glyceraldehyde 3-phosphate-binding site is contributed by S50. Residue D85 is the Proton donor of the active site. H86, D106, E136, and H178 together coordinate Zn(2+). G179 lines the dihydroxyacetone phosphate pocket. A Zn(2+)-binding site is contributed by H208. Dihydroxyacetone phosphate-binding positions include 209-211 (GGS) and 230-233 (NVNT).

Belongs to the class II fructose-bisphosphate aldolase family. Zn(2+) serves as cofactor.

The catalysed reaction is beta-D-fructose 1,6-bisphosphate = D-glyceraldehyde 3-phosphate + dihydroxyacetone phosphate. It functions in the pathway carbohydrate degradation; glycolysis; D-glyceraldehyde 3-phosphate and glycerone phosphate from D-glucose: step 4/4. Catalyzes the aldol condensation of dihydroxyacetone phosphate (DHAP or glycerone-phosphate) with glyceraldehyde 3-phosphate (G3P) to form fructose 1,6-bisphosphate (FBP) in gluconeogenesis and the reverse reaction in glycolysis. The polypeptide is Fructose-bisphosphate aldolase (fba) (Streptococcus pyogenes serotype M1).